We begin with the raw amino-acid sequence, 473 residues long: MAAPSDPPTAATPPAPPPPARRCLLAPSVEPLLFLATLALGLQVPLATQYLWDRLGAERGYVGPNASSPHGCGNGSGAVDPLREEVEALVAHWNLCINLGGFFVGLFSVTLFGPWSDSVGRRPVLVLPAVGMAVQAAVYLLVMYLRLHVAYLLLGRIISGLLGDYNLILAGCFASVADSSNQRTRTFRVAILEACLGVAGMVASVGGGQWRKAEGYINPFWLVLAASLAAALYAALCLQETVKQRRAAKLLTLQHYKAVYKLYTAPEDLSSRRKLALYSLAFFLLVTVHFGTKDLYVLYELGSPLCWASDLIGYGSAASYLAYLSSLGGLRLLQLCLEDTWVAEIGLISNIAGLVVISLATTTPLMFTGYGIMFLSMAATPVIRAKLSKLVGETEQGALFASVACVEGLCSLVATGVFNSLYPSTLHFMRGFPFLFGAILLLIPAAIMGWIEIQDSNLQYSHFSDASSSPADG.

A compositionally biased stretch (pro residues) spans 1–20 (MAAPSDPPTAATPPAPPPPA). Positions 1-21 (MAAPSDPPTAATPPAPPPPAR) are disordered. Over 1–29 (MAAPSDPPTAATPPAPPPPARRCLLAPSV) the chain is Cytoplasmic. Residues 30–48 (EPLLFLATLALGLQVPLAT) traverse the membrane as a helical segment. At 49–90 (QYLWDRLGAERGYVGPNASSPHGCGNGSGAVDPLREEVEALV) the chain is on the extracellular side. 2 N-linked (GlcNAc...) asparagine glycosylation sites follow: Asn65 and Asn74. A disulfide bond links Cys72 and Cys306. The chain crosses the membrane as a helical span at residues 91 to 116 (AHWNLCINLGGFFVGLFSVTLFGPWS). Asn98 contacts pemetrexed. Residues 117–120 (DSVG) lie on the Cytoplasmic side of the membrane. Residues 121–143 (RRPVLVLPAVGMAVQAAVYLLVM) form a helical membrane-spanning segment. At 144-148 (YLRLH) the chain is on the extracellular side. Residues 149–162 (VAYLLLGRIISGLL) form a helical membrane-spanning segment. Topologically, residues 163 to 185 (GDYNLILAGCFASVADSSNQRTR) are cytoplasmic. H(+)-binding residues include Asp164 and Glu193. A helical transmembrane segment spans residues 186–211 (TFRVAILEACLGVAGMVASVGGGQWR). Pemetrexed is bound at residue Glu193. Residues 212–216 (KAEGY) lie on the Extracellular side of the membrane. A helical transmembrane segment spans residues 217–235 (INPFWLVLAASLAAALYAA). Residues 236-274 (LCLQETVKQRRAAKLLTLQHYKAVYKLYTAPEDLSSRRK) lie on the Cytoplasmic side of the membrane. Residues 275–297 (LALYSLAFFLLVTVHFGTKDLYV) form a helical membrane-spanning segment. His289 serves as a coordination point for H(+). Residues 298 to 310 (LYELGSPLCWASD) lie on the Extracellular side of the membrane. A helical transmembrane segment spans residues 311–333 (LIGYGSAASYLAYLSSLGGLRLL). Position 323 (Tyr323) interacts with pemetrexed. The Cytoplasmic portion of the chain corresponds to 334–339 (QLCLED). The helical transmembrane segment at 340 to 359 (TWVAEIGLISNIAGLVVISL) threads the bilayer. At 360–363 (ATTT) the chain is on the extracellular side. Residues 364–384 (PLMFTGYGIMFLSMAATPVIR) form a helical membrane-spanning segment. Residues 385–396 (AKLSKLVGETEQ) are Cytoplasmic-facing. A helical membrane pass occupies residues 397–422 (GALFASVACVEGLCSLVATGVFNSLY). 2 residues coordinate pemetrexed: Glu407 and Ser411. Residues 423-430 (PSTLHFMR) are Extracellular-facing. Residues 431-449 (GFPFLFGAILLLIPAAIMG) traverse the membrane as a helical segment. The Cytoplasmic segment spans residues 450-473 (WIEIQDSNLQYSHFSDASSSPADG).

This sequence belongs to the major facilitator superfamily. SLC46A family. Monomer. In terms of tissue distribution, widely expressed, including brain, aorta, liver, kidney, spleen, small intestine, pancreas, ovary and testis.

It is found in the cell membrane. It localises to the apical cell membrane. The protein resides in the basolateral cell membrane. Its subcellular location is the endosome membrane. The protein localises to the cytoplasm. The catalysed reaction is folate(in) + H(+)(in) = folate(out) + H(+)(out). It catalyses the reaction (6S)-5-methyl-5,6,7,8-tetrahydrofolate(in) + H(+)(in) = (6S)-5-methyl-5,6,7,8-tetrahydrofolate(out) + H(+)(out). The enzyme catalyses methotrexate(in) + H(+)(in) = methotrexate(out) + H(+)(out). It carries out the reaction pemetrexed(in) + H(+)(in) = pemetrexed(out) + H(+)(out). Proton-coupled folate symporter that mediates folate absorption using an H(+) gradient as a driving force. Involved in the intestinal absorption of folates at the brush-border membrane of the proximal jejunum, and the transport from blood to cerebrospinal fluid across the choroid plexus. Functions at acidic pH via alternate outward- and inward-open conformation states. Protonation of residues in the outward open state primes the protein for transport. Binding of folate promotes breaking of salt bridge network and subsequent closure of the extracellular gate, leading to the inward-open state and release of protons and folate. Also able to transport antifolate drugs, such as methotrexate and pemetrexed. Also acts as a lower-affinity, pH-independent heme carrier protein and constitutes the main importer of heme in the intestine. Imports heme in the retina and retinal pigment epithelium, in neurons of the hippocampus, in hepatocytes and in the renal epithelial cells. This is Proton-coupled folate transporter from Gallus gallus (Chicken).